The following is a 452-amino-acid chain: UPF0210 protein Daud_1353 (452 aa).

The protein belongs to the UPF0210 family. In terms of assembly, homodimer.

The polypeptide is UPF0210 protein Daud_1353 (Desulforudis audaxviator (strain MP104C)).